An 85-amino-acid chain; its full sequence is Putative regulatory protein THEYE_A0405 (85 aa).

Belongs to the RemA family.

The polypeptide is Putative regulatory protein THEYE_A0405 (Thermodesulfovibrio yellowstonii (strain ATCC 51303 / DSM 11347 / YP87)).